Reading from the N-terminus, the 426-residue chain is Probable imidazolonepropionase (426 aa).

Positions 159 and 192 each coordinate 4-imidazolone-5-propanoate. Position 159 (Tyr-159) interacts with N-formimidoyl-L-glutamate. A Fe(3+)-binding site is contributed by His-260. Zn(2+) is bound at residue His-260. 4-imidazolone-5-propanoate is bound at residue Glu-263. Asp-334 is a binding site for Fe(3+). Asp-334 contributes to the Zn(2+) binding site. Asn-336 contributes to the N-formimidoyl-L-glutamate binding site.

Belongs to the metallo-dependent hydrolases superfamily. HutI family. The cofactor is Zn(2+). Requires Fe(3+) as cofactor.

It catalyses the reaction 4-imidazolone-5-propanoate + H2O = N-formimidoyl-L-glutamate. Its pathway is amino-acid degradation; L-histidine degradation into L-glutamate; N-formimidoyl-L-glutamate from L-histidine: step 3/3. The protein is Probable imidazolonepropionase (AMDHD1) of Homo sapiens (Human).